We begin with the raw amino-acid sequence, 759 residues long: Protein MEI2-like 3 (759 aa).

RRM domains follow at residues 166–239 and 251–324; these read RTLF…FSIP and GTLV…HSRP.

Its function is as follows. Probable RNA-binding protein that plays a role in meiosis and vegetative growth. The chain is Protein MEI2-like 3 (ML3) from Arabidopsis thaliana (Mouse-ear cress).